The chain runs to 121 residues: Small ribosomal subunit protein uS12c (121 aa).

The protein belongs to the universal ribosomal protein uS12 family. Part of the 30S ribosomal subunit.

It localises to the plastid. Its subcellular location is the chloroplast. In terms of biological role, with S4 and S5 plays an important role in translational accuracy. Located at the interface of the 30S and 50S subunits. This is Small ribosomal subunit protein uS12c (rps12) from Bigelowiella natans (Pedinomonas minutissima).